We begin with the raw amino-acid sequence, 414 residues long: uncharacterized protein (414 aa).

This sequence belongs to the glycosyltransferase 28 family.

This is an uncharacterized protein from Mycobacterium tuberculosis (strain CDC 1551 / Oshkosh).